Here is a 292-residue protein sequence, read N- to C-terminus: Putative peptidyl-prolyl cis-trans isomerase NifM (292 aa).

Positions 148–243 (HILVTINEDF…IGFHVLYCES (96 aa)) constitute a PpiC domain.

The protein belongs to the PpiC/parvulin rotamase family.

It carries out the reaction [protein]-peptidylproline (omega=180) = [protein]-peptidylproline (omega=0). Functionally, required for the activation and stabilization of the iron-component (NifH) of nitrogenase. Probable PPIase. The chain is Putative peptidyl-prolyl cis-trans isomerase NifM (nifM) from Azotobacter vinelandii.